The chain runs to 168 residues: MLVYQDKLSGDELLSDSFPYRELENGVLWEVDGHWVVQGAVDVDIGANPSAEGGGEDEGVDDQAVKVVDIVDTFRLQEQPAFDKKQFIAYIKRYIKNLTAKLEGEELDAFKKNVESATKYLLSKLKDLQFFVGESMHDDGSVVFAYYREGAADPTFLYFAHGLKEVKC.

A TCTP domain is found at 1–168; that stretch reads MLVYQDKLSG…FAHGLKEVKC (168 aa).

It belongs to the TCTP family.

It localises to the cytoplasm. Functionally, involved in calcium binding and microtubule stabilization. This is Translationally-controlled tumor protein homolog (TCTP) from Hordeum vulgare (Barley).